A 225-amino-acid polypeptide reads, in one-letter code: Platelet-activating factor acetylhydrolase IB subunit beta homolog (225 aa).

The protein belongs to the 'GDSL' lipolytic enzyme family. Platelet-activating factor acetylhydrolase IB beta/gamma subunits subfamily. Does not interact with Lis-1.

The sequence is that of Platelet-activating factor acetylhydrolase IB subunit beta homolog (Paf-AHalpha) from Drosophila melanogaster (Fruit fly).